The following is a 262-amino-acid chain: Expansin-A13 (262 aa).

The signal sequence occupies residues Met1–Ala22. The region spanning Gly52 to Gly167 is the Expansin-like EG45 domain. Residues Tyr177 to Ser257 form the Expansin-like CBD domain.

This sequence belongs to the expansin family. Expansin A subfamily. Expressed in roots and flowers.

The protein resides in the secreted. The protein localises to the cell wall. It localises to the membrane. Functionally, may cause loosening and extension of plant cell walls by disrupting non-covalent bonding between cellulose microfibrils and matrix glucans. No enzymatic activity has been found. May be required for rapid internodal elongation in deepwater rice during submergence. The protein is Expansin-A13 (EXPA13) of Oryza sativa subsp. japonica (Rice).